Reading from the N-terminus, the 581-residue chain is Laccase-2 (581 aa).

Residues 1–19 (MKYSTVFTALTALFAQASA) form the signal peptide. Plastocyanin-like domains are found at residues 74 to 191 (SVEN…GPAT) and 197 to 353 (DVGA…YDSS). N-linked (GlcNAc...) asparagine glycosylation is found at asparagine 77, asparagine 93, and asparagine 120. Cu cation contacts are provided by histidine 125, histidine 127, histidine 169, and histidine 171. Residues cysteine 146 and cysteine 562 are joined by a disulfide bond. Residues asparagine 232, asparagine 283, asparagine 343, asparagine 408, asparagine 427, and asparagine 441 are each glycosylated (N-linked (GlcNAc...) asparagine). One can recognise a Plastocyanin-like 3 domain in the interval 413-547 (LLDWSSPTTL…AMQFVESQSS (135 aa)). The Cu cation site is built by histidine 464, histidine 467, histidine 469, histidine 526, cysteine 527, histidine 528, and histidine 532.

This sequence belongs to the multicopper oxidase family. The cofactor is Cu cation.

The protein resides in the secreted. The catalysed reaction is 4 hydroquinone + O2 = 4 benzosemiquinone + 2 H2O. Functionally, lignin degradation and detoxification of lignin-derived products. The polypeptide is Laccase-2 (lcc2) (Botryotinia fuckeliana (Noble rot fungus)).